Here is an 85-residue protein sequence, read N- to C-terminus: Probable Sec-independent protein translocase protein TatE (85 aa).

Residues 1-21 (MEGLSITKLLVVGILIVLLFG) traverse the membrane as a helical segment. The disordered stretch occupies residues 64 to 85 (KTVAETKAASDSQAAASVERKD).

This sequence belongs to the TatA/E family. TatE subfamily.

The protein localises to the cell inner membrane. Part of the twin-arginine translocation (Tat) system that transports large folded proteins containing a characteristic twin-arginine motif in their signal peptide across membranes. TatE shares overlapping functions with TatA. This Yersinia pestis protein is Probable Sec-independent protein translocase protein TatE.